The sequence spans 114 residues: Flagellar transcriptional regulator FlhD (114 aa).

It belongs to the FlhD family. Homodimer; disulfide-linked. Forms a heterohexamer composed of two FlhC and four FlhD subunits. Each FlhC binds a FlhD dimer, forming a heterotrimer, and a hexamer assembles by dimerization of two heterotrimers.

The protein resides in the cytoplasm. Functions in complex with FlhC as a master transcriptional regulator that regulates transcription of several flagellar and non-flagellar operons by binding to their promoter region. Activates expression of class 2 flagellar genes, including fliA, which is a flagellum-specific sigma factor that turns on the class 3 genes. Also regulates genes whose products function in a variety of physiological pathways. The chain is Flagellar transcriptional regulator FlhD from Wigglesworthia glossinidia brevipalpis.